The following is a 149-amino-acid chain: Gonadotropin subunit beta-2 (149 aa).

Positions 1–24 are cleaved as a signal peptide; it reads MARIPECTILLLLCMCVLAVPAQC. 6 disulfides stabilise this stretch: cysteine 30-cysteine 78, cysteine 44-cysteine 93, cysteine 47-cysteine 131, cysteine 55-cysteine 109, cysteine 59-cysteine 111, and cysteine 114-cysteine 121. Asparagine 34 carries N-linked (GlcNAc...) asparagine glycosylation.

Belongs to the glycoprotein hormones subunit beta family. Heterodimer of an alpha and a beta chain.

It is found in the secreted. Involved in gametogenesis and steroidogenesis. This is Gonadotropin subunit beta-2 (cgbb) from Clupea pallasii (Pacific herring).